Here is a 146-residue protein sequence, read N- to C-terminus: ATP synthase epsilon chain (146 aa).

This sequence belongs to the ATPase epsilon chain family. F-type ATPases have 2 components, CF(1) - the catalytic core - and CF(0) - the membrane proton channel. CF(1) has five subunits: alpha(3), beta(3), gamma(1), delta(1), epsilon(1). CF(0) has three main subunits: a, b and c.

The protein resides in the cell membrane. Its function is as follows. Produces ATP from ADP in the presence of a proton gradient across the membrane. The protein is ATP synthase epsilon chain of Lactobacillus delbrueckii subsp. bulgaricus (strain ATCC 11842 / DSM 20081 / BCRC 10696 / JCM 1002 / NBRC 13953 / NCIMB 11778 / NCTC 12712 / WDCM 00102 / Lb 14).